The chain runs to 589 residues: Capsid scaffolding protein (589 aa).

Catalysis depends on charge relay system residues His-47, Ser-118, and His-142. Over residues 264–273 (EKERPKEPEQ) the composition is skewed to basic and acidic residues. Residues 264–283 (EKERPKEPEQSHVPTESMSH) are disordered. Residues 307–326 (HDGVYLPKDAFFSLIGASRP) are interaction with pAP. Disordered regions lie at residues 421 to 478 (RSRS…GDRY) and 514 to 552 (ASPTTTTSHQAEASEPQASTAAAAPSTASSHGSKSAERG). 2 consecutive short sequence motifs (nuclear localization signal) follow at residues 428-433 (KRRRER) and 453-459 (KARKRLK). A compositionally biased stretch (basic residues) spans 453 to 462 (KARKRLKAHH). Residues 514 to 543 (ASPTTTTSHQAEASEPQASTAAAAPSTASS) are compositionally biased toward low complexity. The interval 569–589 (PPKDMVDLNRRLFVAALNKME) is interaction with major capsid protein.

The protein belongs to the herpesviridae capsid scaffolding protein family. As to quaternary structure, homomultimer. Interacts with major capsid protein. Exists in a monomer-dimer equilibrium with the dimer being the active species. Capsid scaffolding protein is cleaved by assemblin after formation of the spherical procapsid. As a result, the capsid obtains its mature, icosahedral shape. Cleavages occur at two or more sites: release (R-site) and maturation (M-site).

The protein localises to the host cytoplasm. Its subcellular location is the host nucleus. It carries out the reaction Cleaves -Ala-|-Ser- and -Ala-|-Ala- bonds in the scaffold protein.. Its function is as follows. Acts as a scaffold protein by binding major capsid protein in the cytoplasm, inducing the nuclear localization of both proteins. Multimerizes in the nucleus such as major capsid protein forms the icosahedral T=16 capsid. Autocatalytic cleavage releases the assembly protein, and subsequently abolishes interaction with major capsid protein. Cleavages products are evicted from the capsid before or during DNA packaging. Protease that plays an essential role in virion assembly within the nucleus. Catalyzes the cleavage of the assembly protein after formation of the spherical procapsid. By that cleavage, the capsid matures and gains its icosahedral shape. The cleavage sites seem to include -Ala-Ser-, -Ala-Ala-, as well as Ala-Thr bonds. Assemblin and cleavages products are evicted from the capsid before or during DNA packaging. In terms of biological role, plays a major role in capsid assembly. Acts as a scaffold protein by binding major capsid protein. Multimerizes in the nucleus such as major capsid protein forms the icosahedral T=16 capsid. Cleaved by assemblin after capsid completion. The cleavages products are evicted from the capsid before or during DNA packaging. The protein is Capsid scaffolding protein (UL80) of Simian cytomegalovirus (strain Colburn).